Reading from the N-terminus, the 717-residue chain is ATP-dependent zinc metalloprotease FtsH (717 aa).

The Cytoplasmic portion of the chain corresponds to 1–9 (MKNASRIFK). A helical membrane pass occupies residues 10 to 30 (GPLIWILLCIGLIIVFLQFAG). Over 31–111 (SGNGYKDIPT…SWQGENPGQS (81 aa)) the chain is Extracellular. A helical transmembrane segment spans residues 112–132 (IWKALLINFLPFVIILLFFLW). Topologically, residues 133–717 (AMNAAQGMGG…NGNPWGPPRS (585 aa)) are cytoplasmic. 207–214 (GPPGTGKT) is a binding site for ATP. Histidine 429 provides a ligand contact to Zn(2+). The active site involves glutamate 430. Zn(2+) is bound by residues histidine 433 and aspartate 505. The segment at 617–717 (AFTGSDKRVP…NGNPWGPPRS (101 aa)) is disordered. The span at 691–717 (PEPPSPTHPGEGPQPPSNGNPWGPPRS) shows a compositional bias: pro residues.

It in the central section; belongs to the AAA ATPase family. The protein in the C-terminal section; belongs to the peptidase M41 family. As to quaternary structure, homohexamer. Requires Zn(2+) as cofactor.

The protein resides in the cell membrane. In terms of biological role, acts as a processive, ATP-dependent zinc metallopeptidase for both cytoplasmic and membrane proteins. Plays a role in the quality control of integral membrane proteins. This Cutibacterium acnes (strain SK137) (Propionibacterium acnes) protein is ATP-dependent zinc metalloprotease FtsH.